We begin with the raw amino-acid sequence, 175 residues long: Shikimate kinase (175 aa).

10-15 serves as a coordination point for ATP; that stretch reads GAGKTT. Residue Thr14 participates in Mg(2+) binding. Substrate is bound by residues Asp32, Arg56, and Gly78. Residue Arg116 participates in ATP binding. Arg135 is a substrate binding site.

Belongs to the shikimate kinase family. In terms of assembly, monomer. It depends on Mg(2+) as a cofactor.

The protein resides in the cytoplasm. The enzyme catalyses shikimate + ATP = 3-phosphoshikimate + ADP + H(+). Its pathway is metabolic intermediate biosynthesis; chorismate biosynthesis; chorismate from D-erythrose 4-phosphate and phosphoenolpyruvate: step 5/7. Its function is as follows. Catalyzes the specific phosphorylation of the 3-hydroxyl group of shikimic acid using ATP as a cosubstrate. The chain is Shikimate kinase from Aromatoleum aromaticum (strain DSM 19018 / LMG 30748 / EbN1) (Azoarcus sp. (strain EbN1)).